Here is a 370-residue protein sequence, read N- to C-terminus: Protein-glutamate methylesterase/protein-glutamine glutaminase of group 1 operon (370 aa).

Residues 4–121 form the Response regulatory domain; it reads KVLVVDDSGF…SRNPDKVKQL (118 aa). Aspartate 55 carries the 4-aspartylphosphate modification. A compositionally biased stretch (low complexity) spans 150 to 180; sequence PASTFTSQAQTRPAAPARAAAPTPAASQSPA. Residues 150–183 are disordered; sequence PASTFTSQAQTRPAAPARAAAPTPAASQSPAPKR. Positions 179 to 370 constitute a CheB-type methylesterase domain; that stretch reads PAPKRKPYKL…IGKHLVEACV (192 aa). Residues serine 194, histidine 221, and aspartate 314 contribute to the active site.

This sequence belongs to the CheB family. Post-translationally, phosphorylated by CheA. Phosphorylation of the N-terminal regulatory domain activates the methylesterase activity.

The protein resides in the cytoplasm. The catalysed reaction is [protein]-L-glutamate 5-O-methyl ester + H2O = L-glutamyl-[protein] + methanol + H(+). It carries out the reaction L-glutaminyl-[protein] + H2O = L-glutamyl-[protein] + NH4(+). Functionally, involved in chemotaxis. Part of a chemotaxis signal transduction system that modulates chemotaxis in response to various stimuli. Catalyzes the demethylation of specific methylglutamate residues introduced into the chemoreceptors (methyl-accepting chemotaxis proteins or MCP) by CheR. Also mediates the irreversible deamidation of specific glutamine residues to glutamic acid. The protein is Protein-glutamate methylesterase/protein-glutamine glutaminase of group 1 operon of Pseudomonas putida (strain ATCC 47054 / DSM 6125 / CFBP 8728 / NCIMB 11950 / KT2440).